Reading from the N-terminus, the 173-residue chain is RxLR effector protein PITG_10232 (173 aa).

A signal peptide spans methionine 1 to alanine 24. The tract at residues serine 25–aspartate 64 is disordered. Basic and acidic residues predominate over residues arginine 37–arginine 49. Positions arginine 46–arginine 65 match the RxLR-dEER motif.

It belongs to the RxLR effector family.

The protein resides in the secreted. Its subcellular location is the host nucleus. It is found in the host cytoplasm. Its function is as follows. Effector that leads to host programmed cell death. In Phytophthora infestans (strain T30-4) (Potato late blight agent), this protein is RxLR effector protein PITG_10232.